We begin with the raw amino-acid sequence, 125 residues long: MKLIDTTIAVDHLRGEPAAAVLLAELINNGEEIAASELVRFELLAGVRESELAALEAFFSAVVWTLVTEDIARIGGRLARRYRSSHRGIDDVDYLIAATAIVVDADLLTTNVRHFPMFPDLQPPY.

The PINc domain occupies 3-122 (LIDTTIAVDH…RHFPMFPDLQ (120 aa)). 2 residues coordinate Mg(2+): aspartate 5 and aspartate 93.

It belongs to the PINc/VapC protein family. It depends on Mg(2+) as a cofactor.

Toxic component of a type II toxin-antitoxin (TA) system. An RNase. Its toxic effect is neutralized by coexpression with cognate antitoxin VapB19. This is Ribonuclease VapC19 from Mycobacterium tuberculosis (strain CDC 1551 / Oshkosh).